A 184-amino-acid chain; its full sequence is Small ribosomal subunit protein uS4c (184 aa).

The S4 RNA-binding domain maps to 82–143; that stretch reads MRLDNILFRL…KQRSKALIQN (62 aa).

The protein belongs to the universal ribosomal protein uS4 family. As to quaternary structure, part of the 30S ribosomal subunit. Contacts protein S5. The interaction surface between S4 and S5 is involved in control of translational fidelity.

It localises to the plastid. The protein localises to the chloroplast. In terms of biological role, one of the primary rRNA binding proteins, it binds directly to 16S rRNA where it nucleates assembly of the body of the 30S subunit. With S5 and S12 plays an important role in translational accuracy. The chain is Small ribosomal subunit protein uS4c (rps4) from Patersonia fragilis (Short purple-flag).